A 353-amino-acid polypeptide reads, in one-letter code: uncharacterized protein (353 aa).

A signal peptide spans 1–24; that stretch reads MRVVKRIAVACYLGITIFSGIAFG.

The protein belongs to the chlamydial CPn_1058/CT_355/TC_0634 family.

This is an uncharacterized protein from Chlamydia muridarum (strain MoPn / Nigg).